We begin with the raw amino-acid sequence, 501 residues long: Pentatricopeptide repeat-containing protein At4g14190, chloroplastic (501 aa).

Residues 1-88 (MENLTTAQFL…SGSCPLRLLQ (88 aa)) constitute a chloroplast transit peptide. 5 PPR repeats span residues 130–160 (SENN…MIDD), 166–200 (SLEI…GLLP), 201–235 (ITET…GCVR), 236–270 (DHVT…KMTL), and 271–305 (EPST…GISL).

Belongs to the PPR family. P subfamily.

The protein resides in the plastid. It is found in the chloroplast. This is Pentatricopeptide repeat-containing protein At4g14190, chloroplastic from Arabidopsis thaliana (Mouse-ear cress).